Consider the following 316-residue polypeptide: Ribosomal protein L11 methyltransferase (316 aa).

Residues T157, G178, D200, and N243 each coordinate S-adenosyl-L-methionine.

This sequence belongs to the methyltransferase superfamily. PrmA family.

It is found in the cytoplasm. The catalysed reaction is L-lysyl-[protein] + 3 S-adenosyl-L-methionine = N(6),N(6),N(6)-trimethyl-L-lysyl-[protein] + 3 S-adenosyl-L-homocysteine + 3 H(+). In terms of biological role, methylates ribosomal protein L11. In Streptococcus pneumoniae (strain P1031), this protein is Ribosomal protein L11 methyltransferase.